The sequence spans 396 residues: MTKTIAINAGSSSLKWQLYLMPEEKVLAKGLIERIGLKDSISTVKFDGCSEQQILDIENHTQAVKILLDDLIRFDIIKAYDEITGVGHRVVAGGEYFKESTVVEGDVLEKVEELSLLAPLHNPANAAGVRAFKELLPDITSVVVFDTSFHTSMPEKAYRYPLPTKYYTENKVRKYGAHGTSHQFVAGEAAKLLGRPLEDLKLITCHIGNGGSITAVKAGKSVDTSMGFTPLGGIMMGTRTGDIDPAIIPYLMQYTEDFNTPEDISRVLNRESGLLGVSANSSDMRDIEAAVAEGNHEASLAYEMYVDRIQKYIGQYLAVLNGADAIVFTAGVGENAENFRRDVISGISWFGCDVDDEKNVFGVTGDISTEAAKIRVLVIPTDEELVIARDVERLKK.

A Mg(2+)-binding site is contributed by asparagine 8. Lysine 15 serves as a coordination point for ATP. Residue arginine 89 coordinates substrate. The active-site Proton donor/acceptor is aspartate 146. ATP contacts are provided by residues 206 to 210 (HIGNG), 283 to 285 (DMR), and 331 to 335 (GVGEN). Glutamate 383 is a Mg(2+) binding site.

This sequence belongs to the acetokinase family. In terms of assembly, homodimer. Requires Mg(2+) as cofactor. Mn(2+) is required as a cofactor.

It is found in the cytoplasm. It carries out the reaction acetate + ATP = acetyl phosphate + ADP. The protein operates within metabolic intermediate biosynthesis; acetyl-CoA biosynthesis; acetyl-CoA from acetate: step 1/2. In terms of biological role, catalyzes the formation of acetyl phosphate from acetate and ATP. Can also catalyze the reverse reaction. This Streptococcus pneumoniae (strain Hungary19A-6) protein is Acetate kinase.